Here is a 272-residue protein sequence, read N- to C-terminus: Imidazole glycerol phosphate synthase subunit HisF (272 aa).

Active-site residues include D11 and D130.

The protein belongs to the HisA/HisF family. As to quaternary structure, heterodimer of HisH and HisF.

The protein localises to the cytoplasm. It catalyses the reaction 5-[(5-phospho-1-deoxy-D-ribulos-1-ylimino)methylamino]-1-(5-phospho-beta-D-ribosyl)imidazole-4-carboxamide + L-glutamine = D-erythro-1-(imidazol-4-yl)glycerol 3-phosphate + 5-amino-1-(5-phospho-beta-D-ribosyl)imidazole-4-carboxamide + L-glutamate + H(+). It participates in amino-acid biosynthesis; L-histidine biosynthesis; L-histidine from 5-phospho-alpha-D-ribose 1-diphosphate: step 5/9. IGPS catalyzes the conversion of PRFAR and glutamine to IGP, AICAR and glutamate. The HisF subunit catalyzes the cyclization activity that produces IGP and AICAR from PRFAR using the ammonia provided by the HisH subunit. This chain is Imidazole glycerol phosphate synthase subunit HisF, found in Methanococcus vannielii (strain ATCC 35089 / DSM 1224 / JCM 13029 / OCM 148 / SB).